Consider the following 165-residue polypeptide: Putative tyrosine-protein phosphatase AMV078 (165 aa).

The 148-residue stretch at 2 to 149 (NISNINNDIY…LKFYNSYKNI (148 aa)) folds into the Tyrosine-protein phosphatase domain. Residue cysteine 94 is the Phosphocysteine intermediate of the active site.

This sequence belongs to the protein-tyrosine phosphatase family. Non-receptor class dual specificity subfamily.

It carries out the reaction O-phospho-L-tyrosyl-[protein] + H2O = L-tyrosyl-[protein] + phosphate. In Amsacta moorei entomopoxvirus (AmEPV), this protein is Putative tyrosine-protein phosphatase AMV078.